Consider the following 289-residue polypeptide: Pyridoxal kinase PdxY (289 aa).

Substrate contacts are provided by residues Ser9 and 44–45; that span reads TQ. ATP-binding residues include Asp112, Val144, Glu149, and Lys182. Residue Asp221 participates in substrate binding.

This sequence belongs to the pyridoxine kinase family. PdxY subfamily. Homodimer. Mg(2+) serves as cofactor.

It carries out the reaction pyridoxal + ATP = pyridoxal 5'-phosphate + ADP + H(+). Its pathway is cofactor metabolism; pyridoxal 5'-phosphate salvage; pyridoxal 5'-phosphate from pyridoxal: step 1/1. Functionally, pyridoxal kinase involved in the salvage pathway of pyridoxal 5'-phosphate (PLP). Catalyzes the phosphorylation of pyridoxal to PLP. This Vibrio campbellii (strain ATCC BAA-1116) protein is Pyridoxal kinase PdxY.